Here is a 341-residue protein sequence, read N- to C-terminus: tRNA N6-adenosine threonylcarbamoyltransferase (341 aa).

Fe cation contacts are provided by His111 and His115. Substrate-binding positions include 134–138 (LVSGG), Asp167, Gly180, and Asn276. Asp304 serves as a coordination point for Fe cation.

Belongs to the KAE1 / TsaD family. The cofactor is Fe(2+).

The protein resides in the cytoplasm. The catalysed reaction is L-threonylcarbamoyladenylate + adenosine(37) in tRNA = N(6)-L-threonylcarbamoyladenosine(37) in tRNA + AMP + H(+). Required for the formation of a threonylcarbamoyl group on adenosine at position 37 (t(6)A37) in tRNAs that read codons beginning with adenine. Is involved in the transfer of the threonylcarbamoyl moiety of threonylcarbamoyl-AMP (TC-AMP) to the N6 group of A37, together with TsaE and TsaB. TsaD likely plays a direct catalytic role in this reaction. The sequence is that of tRNA N6-adenosine threonylcarbamoyltransferase from Alteromonas mediterranea (strain DSM 17117 / CIP 110805 / LMG 28347 / Deep ecotype).